Consider the following 111-residue polypeptide: T cell receptor alpha variable 18 (111 aa).

The signal sequence occupies residues Met-1–Gly-20. Residues Asp-21 to Arg-111 enclose the Ig-like domain. The N-linked (GlcNAc...) asparagine glycan is linked to Asn-41. The cysteines at positions 42 and 108 are disulfide-linked.

Alpha-beta TR is a heterodimer composed of an alpha and beta chain; disulfide-linked. The alpha-beta TR is associated with the transmembrane signaling CD3 coreceptor proteins to form the TR-CD3 (TcR or TCR). The assembly of alpha-beta TR heterodimers with CD3 occurs in the endoplasmic reticulum where a single alpha-beta TR heterodimer associates with one CD3D-CD3E heterodimer, one CD3G-CD3E heterodimer and one CD247 homodimer forming a stable octameric structure. CD3D-CD3E and CD3G-CD3E heterodimers preferentially associate with TR alpha and TR beta chains, respectively. The association of the CD247 homodimer is the last step of TcR assembly in the endoplasmic reticulum and is required for transport to the cell surface.

Its subcellular location is the cell membrane. V region of the variable domain of T cell receptor (TR) alpha chain that participates in the antigen recognition. Alpha-beta T cell receptors are antigen specific receptors which are essential to the immune response and are present on the cell surface of T lymphocytes. Recognize peptide-major histocompatibility (MH) (pMH) complexes that are displayed by antigen presenting cells (APC), a prerequisite for efficient T cell adaptive immunity against pathogens. Binding of alpha-beta TR to pMH complex initiates TR-CD3 clustering on the cell surface and intracellular activation of LCK that phosphorylates the ITAM motifs of CD3G, CD3D, CD3E and CD247 enabling the recruitment of ZAP70. In turn ZAP70 phosphorylates LAT, which recruits numerous signaling molecules to form the LAT signalosome. The LAT signalosome propagates signal branching to three major signaling pathways, the calcium, the mitogen-activated protein kinase (MAPK) kinase and the nuclear factor NF-kappa-B (NF-kB) pathways, leading to the mobilization of transcription factors that are critical for gene expression and essential for T cell growth and differentiation. The T cell repertoire is generated in the thymus, by V-(D)-J rearrangement. This repertoire is then shaped by intrathymic selection events to generate a peripheral T cell pool of self-MH restricted, non-autoaggressive T cells. Post-thymic interaction of alpha-beta TR with the pMH complexes shapes TR structural and functional avidity. The chain is T cell receptor alpha variable 18 from Homo sapiens (Human).